Reading from the N-terminus, the 331-residue chain is Type 2 lactosamine alpha-2,3-sialyltransferase (331 aa).

The Cytoplasmic portion of the chain corresponds to 1-4; the sequence is MKGY. The chain crosses the membrane as a helical; Signal-anchor for type II membrane protein span at residues 5-25; the sequence is VVAIFLSSIFLYYVLYCILWG. Over 26 to 331 the chain is Lumenal; it reads TNGYWFPNEE…KKMVINLTQN (306 aa). Asn-129, Asn-181, Asn-295, Asn-308, and Asn-327 each carry an N-linked (GlcNAc...) asparagine glycan.

The protein belongs to the glycosyltransferase 29 family.

Its subcellular location is the golgi apparatus membrane. It catalyses the reaction a neolactoside nLc4Cer(d18:1(4E)) + CMP-N-acetyl-beta-neuraminate = a neolactoside IV(3)-alpha-NeuAc-nLc4Cer(d18:1(4E)) + CMP + H(+). The enzyme catalyses a beta-D-galactosyl-(1-&gt;4)-N-acetyl-beta-D-glucosaminyl derivative + CMP-N-acetyl-beta-neuraminate = an N-acetyl-alpha-neuraminyl-(2-&gt;3)-beta-D-galactosyl-(1-&gt;4)-N-acetyl-beta-D-glucosaminyl derivative + CMP + H(+). The catalysed reaction is a neolactoside nLc6Cer(d18:1(4E)) + CMP-N-acetyl-beta-neuraminate = a neolactoside VI(3)-alpha-NeuNAc-nLc6Cer(d18:1(4E)) + CMP + H(+). Transfers the sialyl residue from CMP-N-acetyl-beta-neuraminate to the terminal galactose residue on sugar chains of glycoproteins and glycolipids. It's alpha-2,3-sialyltransferase activity is specific toward type II glycan chains (Galbeta1-4GlcNAc) on glycoproteins and glycolipids such as neolactosides nLc4Cer and nLc6Cer, whose sialyl-products serve as precursors for the Lewis X antigen. Critically involved in the synthesis of functional selectin ligands needed for neutrophil recruitment during inflammation and lymphocyte homing to the lymph nodes. The sequence is that of Type 2 lactosamine alpha-2,3-sialyltransferase (St3gal6) from Rattus norvegicus (Rat).